The chain runs to 252 residues: Uracil-DNA glycosylase (252 aa).

The active-site Proton acceptor is the Asp-78.

Belongs to the uracil-DNA glycosylase (UDG) superfamily. UNG family.

It localises to the cytoplasm. The enzyme catalyses Hydrolyzes single-stranded DNA or mismatched double-stranded DNA and polynucleotides, releasing free uracil.. Functionally, excises uracil residues from the DNA which can arise as a result of misincorporation of dUMP residues by DNA polymerase or due to deamination of cytosine. This is Uracil-DNA glycosylase from Bordetella avium (strain 197N).